The primary structure comprises 442 residues: Mitochondrial distribution and morphology protein 12 (442 aa).

The SMP-LTD domain occupies 1-442 (MSIDINWEAA…VYPSFWTFLV (442 aa)). 3 disordered regions span residues 67 to 125 (NDFY…RVGY), 202 to 277 (LSLA…RRMR), and 364 to 387 (EGYHDHHNHHHSGNTNTTGSRRSN). The segment covering 69–80 (FYEEDEDGEDLS) has biased composition (acidic residues). Residues 90 to 100 (PSSQGLSQSTP) are compositionally biased toward polar residues. A compositionally biased stretch (low complexity) spans 101-112 (NGDAGSSNSSSN). Residues 213–222 (RQRERARSSD) are compositionally biased toward basic and acidic residues. Low complexity predominate over residues 227 to 245 (SPQSRSRPSTSSTRQRTST).

It belongs to the MDM12 family. As to quaternary structure, component of the ER-mitochondria encounter structure (ERMES) or MDM complex, composed of MMM1, MDM10, MDM12 and MDM34. An MMM1 homodimer associates with one molecule of MDM12 on each side in a pairwise head-to-tail manner, and the SMP-LTD domains of MMM1 and MDM12 generate a continuous hydrophobic tunnel for phospholipid trafficking.

The protein resides in the mitochondrion outer membrane. It is found in the endoplasmic reticulum membrane. Component of the ERMES/MDM complex, which serves as a molecular tether to connect the endoplasmic reticulum (ER) and mitochondria. Components of this complex are involved in the control of mitochondrial shape and protein biogenesis, and function in nonvesicular lipid trafficking between the ER and mitochondria. MDM12 is required for the interaction of the ER-resident membrane protein MMM1 and the outer mitochondrial membrane-resident beta-barrel protein MDM10. The MDM12-MMM1 subcomplex functions in the major beta-barrel assembly pathway that is responsible for biogenesis of all mitochondrial outer membrane beta-barrel proteins, and acts in a late step after the SAM complex. The MDM10-MDM12-MMM1 subcomplex further acts in the TOM40-specific pathway after the action of the MDM12-MMM1 complex. Essential for establishing and maintaining the structure of mitochondria and maintenance of mtDNA nucleoids. The polypeptide is Mitochondrial distribution and morphology protein 12 (Arthroderma otae (strain ATCC MYA-4605 / CBS 113480) (Microsporum canis)).